Here is a 423-residue protein sequence, read N- to C-terminus: AP-1 complex subunit mu-2 (423 aa).

An MHD domain is found at K168–R421.

Belongs to the adaptor complexes medium subunit family. As to quaternary structure, adaptor protein complex 1 (AP-1) is a heterotetramer composed of two large adaptins (gamma-type subunit AP1G1 and beta-type subunit AP1B1), a medium adaptin (mu-type subunit AP1M1 or AP1M2) and a small adaptin (sigma-type subunit AP1S1 or AP1S2 or AP1S3). Interacts with P2X4. In terms of processing, phosphorylation of membrane-bound AP1M1/AP1M2 increases its affinity for sorting signals.

The protein localises to the golgi apparatus. Its subcellular location is the cytoplasmic vesicle. It is found in the clathrin-coated vesicle membrane. In terms of biological role, subunit of clathrin-associated adaptor protein complex 1 that plays a role in protein sorting in the trans-Golgi network (TGN) and endosomes. The AP complexes mediate the recruitment of clathrin to membranes and the recognition of sorting signals within the cytosolic tails of transmembrane cargo molecules. The polypeptide is AP-1 complex subunit mu-2 (Ap1m2) (Rattus norvegicus (Rat)).